The following is a 529-amino-acid chain: Peptide chain release factor 3 (529 aa).

The region spanning Ser11–Leu280 is the tr-type G domain. GTP is bound by residues Ser20–Thr27, Asp88–His92, and Asn142–Asp145.

The protein belongs to the TRAFAC class translation factor GTPase superfamily. Classic translation factor GTPase family. PrfC subfamily.

It localises to the cytoplasm. In terms of biological role, increases the formation of ribosomal termination complexes and stimulates activities of RF-1 and RF-2. It binds guanine nucleotides and has strong preference for UGA stop codons. It may interact directly with the ribosome. The stimulation of RF-1 and RF-2 is significantly reduced by GTP and GDP, but not by GMP. The polypeptide is Peptide chain release factor 3 (Vibrio vulnificus (strain CMCP6)).